The primary structure comprises 524 residues: Bifunctional methyltransferase (524 aa).

The hemK stretch occupies residues 1 to 306; that stretch reads MQCSIKQILS…GHSRVILFSP (306 aa). Positions 1 to 308 are RF MTase; sequence MQCSIKQILS…SRVILFSPIN (308 aa). Residues 146–150, Asp169, Trp198, Asn213, Glu353, Glu378, Asn405, and Asp427 each bind S-adenosyl-L-methionine; that span reads GTGSG. Substrate is bound at residue 213–216; the sequence is NPPY. Residues 307–524 are tRNA (guanine-N(7)-)-methyltransferase; sequence INLNRSYARR…MILRHVLGDH (218 aa). A tRNA MTase region spans residues 311–524; the sequence is RSYARRIGKS…MILRHVLGDH (214 aa). Asp427 is a catalytic residue. Residues Lys431 and Asp463 each coordinate substrate.

This sequence in the C-terminal section; belongs to the class I-like SAM-binding methyltransferase superfamily. TrmB family. In the N-terminal section; belongs to the protein N5-glutamine methyltransferase family. PrmC subfamily.

It carries out the reaction L-glutaminyl-[peptide chain release factor] + S-adenosyl-L-methionine = N(5)-methyl-L-glutaminyl-[peptide chain release factor] + S-adenosyl-L-homocysteine + H(+). The catalysed reaction is guanosine(46) in tRNA + S-adenosyl-L-methionine = N(7)-methylguanosine(46) in tRNA + S-adenosyl-L-homocysteine. Methylates the class 1 translation termination release factors RF1/PrfA and RF2/PrfB on the glutamine residue of the universally conserved GGQ motif. Functionally, catalyzes the formation of N(7)-methylguanine at position 46 (m7G46) in tRNA. The sequence is that of Bifunctional methyltransferase (prmC/trmB) from Rickettsia conorii (strain ATCC VR-613 / Malish 7).